The following is a 411-amino-acid chain: Tyrosine--tRNA ligase (411 aa).

The 'HIGH' region signature appears at 48–57 (PTAPDIHLGH). The 'KMSKS' region signature appears at 232 to 236 (KMSKS). Residue Lys-235 coordinates ATP. The region spanning 347–409 (VLLPKVLFSA…GKRRFLKIIF (63 aa)) is the S4 RNA-binding domain.

The protein belongs to the class-I aminoacyl-tRNA synthetase family. TyrS type 2 subfamily. As to quaternary structure, homodimer.

It localises to the cytoplasm. The catalysed reaction is tRNA(Tyr) + L-tyrosine + ATP = L-tyrosyl-tRNA(Tyr) + AMP + diphosphate + H(+). In terms of biological role, catalyzes the attachment of tyrosine to tRNA(Tyr) in a two-step reaction: tyrosine is first activated by ATP to form Tyr-AMP and then transferred to the acceptor end of tRNA(Tyr). This is Tyrosine--tRNA ligase from Carboxydothermus hydrogenoformans (strain ATCC BAA-161 / DSM 6008 / Z-2901).